A 453-amino-acid polypeptide reads, in one-letter code: Crh-like protein CRH11 (453 aa).

The N-terminal stretch at 1-21 (MKFTTLATIASTLLFAANANA) is a signal peptide. C24 and C32 are disulfide-bonded. The GH16 domain occupies 28 to 227 (KSSDCSPVPA…WAGGITDYSQ (200 aa)). The active-site Nucleophile is the E119. The active-site Proton donor is the E123. Residues E123, W204, and T215 each contribute to the chitin site. 3 disordered regions span residues 281–343 (LESG…SEKS), 362–397 (KTTV…PASA), and 410–430 (GDAA…TENN). Composition is skewed to low complexity over residues 286–343 (SVDS…SEKS), 363–397 (TTVT…PASA), and 412–425 (AAPS…PSVS). N290 is a glycosylation site (N-linked (GlcNAc...) asparagine). N430 carries GPI-anchor amidated asparagine lipidation. A propeptide spans 431 to 453 (GAVSVAKTTSLFGFVALIGFLFV) (removed in mature form).

It belongs to the glycosyl hydrolase 16 family. CRH1 subfamily. The GPI-anchor is attached to the protein in the endoplasmic reticulum and serves to target the protein to the cell surface. There, the glucosamine-inositol phospholipid moiety is cleaved off and the GPI-modified mannoprotein is covalently attached via its lipidless GPI glycan remnant to the 1,6-beta-glucan of the outer cell wall layer.

The protein localises to the secreted. The protein resides in the cell wall. It is found in the membrane. It carries out the reaction Random endo-hydrolysis of N-acetyl-beta-D-glucosaminide (1-&gt;4)-beta-linkages in chitin and chitodextrins.. Dual chitinase/transglycosylase that plays a role in cell wall architecture. Chitinase and transglycosylase activities are coupled. Required for the polysaccharide cross-linking at the septa and the cell wall. More specifically, transfers chitin to 1,6-beta-glucan in the cell wall. Plays an important role in fungal pathogenesis via its functions in cell wall assembly and regeneration, filamentation, and adherence to host cells. The polypeptide is Crh-like protein CRH11 (CRH11) (Candida albicans (strain SC5314 / ATCC MYA-2876) (Yeast)).